The following is a 712-amino-acid chain: Ribosomal RNA large subunit methyltransferase K/L (712 aa).

The THUMP domain occupies Q42–L153.

It belongs to the methyltransferase superfamily. RlmKL family.

It localises to the cytoplasm. The enzyme catalyses guanosine(2445) in 23S rRNA + S-adenosyl-L-methionine = N(2)-methylguanosine(2445) in 23S rRNA + S-adenosyl-L-homocysteine + H(+). It catalyses the reaction guanosine(2069) in 23S rRNA + S-adenosyl-L-methionine = N(2)-methylguanosine(2069) in 23S rRNA + S-adenosyl-L-homocysteine + H(+). Functionally, specifically methylates the guanine in position 2445 (m2G2445) and the guanine in position 2069 (m7G2069) of 23S rRNA. In Stenotrophomonas maltophilia (strain K279a), this protein is Ribosomal RNA large subunit methyltransferase K/L.